The primary structure comprises 321 residues: MKFVATLIACGLSGLALAAPTATVNSLGKRAADDAAFGYASLNGGTTGGAGGTTTTVSSYAAFTAAVSSDAKKVVYVSGPIKQSAKQVKVGSNTSIIGKDSTAVLEGFGLLVKEKSNVIIRNLGVKKVLAENGDAIGIQYSNNVWVDHVDVSSDRDHDKDYYDGLIDVTHAADYVTISNSYIHDHWKASLVGHSDNNGDEDKGHLRVTYANNYWSNINSRAPSLRFGTGHIYNSYFENVSDGINTRDGAQVLVESNQFVGSSKALYSTDDGYAVERDNDFGGAKNTALQGTLTTVPYSYSLLGSSKVKSAVVGVAGQTLKF.

The N-terminal stretch at 1–18 is a signal peptide; it reads MKFVATLIACGLSGLALA. Residue asparagine 93 is glycosylated (N-linked (GlcNAc...) asparagine). 3 residues coordinate Ca(2+): aspartate 134, aspartate 163, and aspartate 167. Arginine 220 is a catalytic residue. N-linked (GlcNAc...) asparagine glycosylation occurs at asparagine 238.

The protein belongs to the polysaccharide lyase 1 family. Ca(2+) serves as cofactor.

It localises to the secreted. It carries out the reaction Eliminative cleavage of (1-&gt;4)-alpha-D-galacturonan to give oligosaccharides with 4-deoxy-alpha-D-galact-4-enuronosyl groups at their non-reducing ends.. Functionally, pectinolytic enzyme consist of four classes of enzymes: pectin lyase, polygalacturonase, pectin methylesterase and rhamnogalacturonase. Among pectinolytic enzymes, pectin lyase is the most important in depolymerization of pectin, since it cleaves internal glycosidic bonds of highly methylated pectins. Favors pectate, the anion, over pectin, the methyl ester. This is Probable pectate lyase A (plyA) from Aspergillus fumigatus (strain ATCC MYA-4609 / CBS 101355 / FGSC A1100 / Af293) (Neosartorya fumigata).